The sequence spans 226 residues: Large ribosomal subunit protein uL1 (226 aa).

The protein belongs to the universal ribosomal protein uL1 family. Part of the 50S ribosomal subunit.

Its function is as follows. Binds directly to 23S rRNA. The L1 stalk is quite mobile in the ribosome, and is involved in E site tRNA release. Protein L1 is also a translational repressor protein, it controls the translation of the L11 operon by binding to its mRNA. The polypeptide is Large ribosomal subunit protein uL1 (Mycoplasmoides gallisepticum (strain R(low / passage 15 / clone 2)) (Mycoplasma gallisepticum)).